Reading from the N-terminus, the 184-residue chain is SsrA-binding protein (184 aa).

Polar residues predominate over residues 1 to 11 (MAAKKSTPTDS). The segment at 1–31 (MAAKKSTPTDSGKSKGKKNKAQKGAGQKGAG) is disordered.

This sequence belongs to the SmpB family.

It localises to the cytoplasm. Functionally, required for rescue of stalled ribosomes mediated by trans-translation. Binds to transfer-messenger RNA (tmRNA), required for stable association of tmRNA with ribosomes. tmRNA and SmpB together mimic tRNA shape, replacing the anticodon stem-loop with SmpB. tmRNA is encoded by the ssrA gene; the 2 termini fold to resemble tRNA(Ala) and it encodes a 'tag peptide', a short internal open reading frame. During trans-translation Ala-aminoacylated tmRNA acts like a tRNA, entering the A-site of stalled ribosomes, displacing the stalled mRNA. The ribosome then switches to translate the ORF on the tmRNA; the nascent peptide is terminated with the 'tag peptide' encoded by the tmRNA and targeted for degradation. The ribosome is freed to recommence translation, which seems to be the essential function of trans-translation. This is SsrA-binding protein from Corynebacterium jeikeium (strain K411).